The following is a 98-amino-acid chain: NADH-ubiquinone oxidoreductase chain 4L (98 aa).

3 helical membrane-spanning segments follow: residues 1 to 21 (MPFI…GLLI), 29 to 49 (SLLC…LMTL), and 61 to 81 (IVLL…LVLI).

It belongs to the complex I subunit 4L family. In terms of assembly, core subunit of respiratory chain NADH dehydrogenase (Complex I) which is composed of 45 different subunits.

It is found in the mitochondrion inner membrane. The catalysed reaction is a ubiquinone + NADH + 5 H(+)(in) = a ubiquinol + NAD(+) + 4 H(+)(out). Its function is as follows. Core subunit of the mitochondrial membrane respiratory chain NADH dehydrogenase (Complex I) which catalyzes electron transfer from NADH through the respiratory chain, using ubiquinone as an electron acceptor. Part of the enzyme membrane arm which is embedded in the lipid bilayer and involved in proton translocation. The polypeptide is NADH-ubiquinone oxidoreductase chain 4L (MT-ND4L) (Aotus trivirgatus (Three-striped night monkey)).